Reading from the N-terminus, the 166-residue chain is Small heat shock protein OV25-2 (166 aa).

Residues 38-149 enclose the sHSP domain; sequence LNECNIGNSL…ASRNIPIRAS (112 aa). Residues 140–166 are disordered; sequence ASRNIPIRASPKEPEANQKSAINDAKQ.

This sequence belongs to the small heat shock protein (HSP20) family.

This Onchocerca volvulus protein is Small heat shock protein OV25-2 (OV25-2).